A 242-amino-acid polypeptide reads, in one-letter code: Required for respiratory growth protein 7, mitochondrial (242 aa).

This sequence belongs to the RRG7 family.

The protein resides in the mitochondrion. The protein is Required for respiratory growth protein 7, mitochondrial (RRG7) of Saccharomyces cerevisiae (strain ATCC 204508 / S288c) (Baker's yeast).